Consider the following 486-residue polypeptide: Heme A synthase COX15 (486 aa).

The N-terminal 33 residues, 1-33 (MLFRNIEVGRQAAKLLTRTSSRLAWQSIGASRN), are a transit peptide targeting the mitochondrion. Over 34-85 (ISTIRQQIRKTQLYNFKKTVSIRPFSLSSPVFKPHVASESNPIESRLKTSKN) the chain is Mitochondrial matrix. Residues 86-106 (VAYWLIGTSGLVFGIVVLGGL) traverse the membrane as a helical segment. Over 107–170 (TRLTESGLSI…FIFFMEWIHR (64 aa)) the chain is Mitochondrial intermembrane. Residue histidine 169 coordinates heme o. The chain crosses the membrane as a helical span at residues 171–191 (LWGRAIGAVFILPAVYFAVSK). The Mitochondrial matrix portion of the chain corresponds to 192–200 (KTSGHVNKR). The chain crosses the membrane as a helical span at residues 201–221 (LFGLAGLLGLQGFVGWWMVKS). The Mitochondrial intermembrane segment spans residues 222–243 (GLDQEQLDARKSKPTVSQYRLT). The chain crosses the membrane as a helical span at residues 244–264 (THLGTAFFLYMGMLWTGLEIL). Histidine 245 serves as a coordination point for heme o. Residues 265-293 (RECKWIKNPVQAISLFKKLDNPAIGPMRK) lie on the Mitochondrial matrix side of the membrane. Residues 294 to 314 (ISLALLAVSFLTAMSGGMVAG) form a helical membrane-spanning segment. The Mitochondrial intermembrane portion of the chain corresponds to 315-364 (LDAGWVYNTWPKMGERWFPSSRELMDENFCRREDKKDLWWRNLLENPVTV). A helical membrane pass occupies residues 365–387 (QLVHRTCAYVAFTSVLAAHMYAI). Histidine 368 lines the heme b pocket. The Mitochondrial matrix segment spans residues 388–402 (KKKAVIPRNAMTSLH). A helical membrane pass occupies residues 403-423 (VMMGVVTLQATLGILTILYLV). A topological domain (mitochondrial intermembrane) is located at residue proline 424. A helical transmembrane segment spans residues 425-445 (ISLASIHQAGALALLTSSLVF). Position 431 (histidine 431) interacts with heme b. The Mitochondrial matrix portion of the chain corresponds to 446 to 486 (ASQLRKPRAPMRNVIITLPHSSKVTSGKILSEASKLASKPL).

Belongs to the COX15/CtaA family. Type 2 subfamily. In terms of assembly, forms 200-350 kDa oligomeric complexes independent on heme binding. In addition to form homooligomeric complexes, a portion also associates with the mitochondrial respiratory supercomplexes. Interacts with CcO assembly factors PET117, SHY1, COA3 and COA1, CcO subunit COX13 and cytochrome b-c1 subunit COR1. Heme b is required as a cofactor.

The protein localises to the mitochondrion inner membrane. The catalysed reaction is Fe(II)-heme o + 2 A + H2O = Fe(II)-heme a + 2 AH2. It participates in porphyrin-containing compound metabolism; heme A biosynthesis; heme A from heme O: step 1/1. Functionally, catalyzes the second reaction in the biosynthesis of heme A, a prosthetic group of mitochondrial cytochrome c oxidase (CcO). Heme A is synthesized from heme B by two sequential enzymatic reactions catalyzed by heme O synthase (HOS/COX10) and heme A synthase (HAS/COX15). HAS catalyzes the conversion of heme O to heme A by two successive hydroxylations of the methyl group at C8, in a reaction that involves matrix ferredoxin YAH1 and ferredoxin reductase ARH1. The first hydroxylation forms heme I, the second hydroxylation results in an unstable dihydroxymethyl group, which spontaneously dehydrates, resulting in the formyl group of heme A. May also play a secondary role in CcO assembly. Plays a role in the maturation of COX1, the heme A-containing structural CcO subunit, possibly by interacting with the COX1-containing sub-assembly complexes that form prior to heme A insertion. May also positively regulate the upstream enzymatic reaction, farnesylation of heme B by HOS/COX10. The chain is Heme A synthase COX15 from Saccharomyces cerevisiae (strain ATCC 204508 / S288c) (Baker's yeast).